Consider the following 421-residue polypeptide: Uracil permease (421 aa).

12 consecutive transmembrane segments (helical) span residues 18 to 38 (IPLSLQHLFAMFGSTVLVPML), 41 to 61 (INPAICLLMNGIGTLIYIFLC), 65 to 85 (IPAYLGSSFAFISPVLIVIST), 89 to 109 (EAALSGFLVVGLVFCLIGLLV), 115 to 135 (GWIEIVFPPAAMGAIVAVIGL), 160 to 180 (PKVIAVSLVTLLTAVVGNVMF), 186 to 206 (IIPILISIIVGYALAAFLGIV), 232 to 252 (IAIIVPAALVVVAEHIGHLIV), 304 to 324 (VYSIWIIGGAAVMAIVLSFVG), 329 to 349 (LIQTIPVPVMGGVSILLFGVI), 371 to 391 (ILTAVVLIIGISGAAFKWGNF), and 393 to 413 (MKGMALATVIAILLGLFFNII).

Belongs to the nucleobase:cation symporter-2 (NCS2) (TC 2.A.40) family.

The protein localises to the cell membrane. Inhibited by the proton gradient disruptor carbonyl cyanide m-chlorophenylhydrazone (CCCP), but not by the sodium gradient disruptor ouabain. Both xanthine and uric acid act as competitive inhibitors of uracil transport. Specific for the uptake of uracil. Transport is probably proton-dependent. The protein is Uracil permease of Paenibacillus larvae subsp. larvae (strain NRRL B-3650 / LMG 16245).